Here is a 358-residue protein sequence, read N- to C-terminus: Fructose-bisphosphate aldolase 7, cytosolic (358 aa).

Ser-2 carries the N-acetylserine modification. Arg-52 is a binding site for substrate. Position 68 is an S-glutathionyl cysteine; transient (Cys-68). Lys-142 contributes to the substrate binding site. An S-glutathionyl cysteine; transient; alternate modification is found at Cys-173. The residue at position 173 (Cys-173) is an S-nitrosocysteine; transient; alternate. Catalysis depends on Glu-183, which acts as the Proton acceptor. Lys-225 functions as the Schiff-base intermediate with dihydroxyacetone-P in the catalytic mechanism. A substrate-binding site is contributed by 266-268 (SGI).

It belongs to the class I fructose-bisphosphate aldolase family. In terms of assembly, homotetramer. In terms of processing, S-glutathionylated at Cys-68 and Cys-173. S-nitrosylated at Cys-173. In terms of tissue distribution, highly expressed in flowers, and at lower levels in rosettes leaves and cauline leaves.

It is found in the cytoplasm. It localises to the cytosol. The catalysed reaction is beta-D-fructose 1,6-bisphosphate = D-glyceraldehyde 3-phosphate + dihydroxyacetone phosphate. It participates in carbohydrate degradation; glycolysis; D-glyceraldehyde 3-phosphate and glycerone phosphate from D-glucose: step 4/4. In terms of biological role, plays a key role in glycolysis and gluconeogenesis. The chain is Fructose-bisphosphate aldolase 7, cytosolic from Arabidopsis thaliana (Mouse-ear cress).